We begin with the raw amino-acid sequence, 92 residues long: Small ribosomal subunit protein uS19 (92 aa).

Belongs to the universal ribosomal protein uS19 family.

Functionally, protein S19 forms a complex with S13 that binds strongly to the 16S ribosomal RNA. This chain is Small ribosomal subunit protein uS19, found in Rippkaea orientalis (strain PCC 8801 / RF-1) (Cyanothece sp. (strain PCC 8801)).